The sequence spans 259 residues: Ribosomal RNA small subunit methyltransferase J (259 aa).

S-adenosyl-L-methionine is bound by residues 101 to 102, 117 to 118, 153 to 154, and D176; these read RD, ER, and SS.

The protein belongs to the methyltransferase superfamily. RsmJ family.

It is found in the cytoplasm. The enzyme catalyses guanosine(1516) in 16S rRNA + S-adenosyl-L-methionine = N(2)-methylguanosine(1516) in 16S rRNA + S-adenosyl-L-homocysteine + H(+). Functionally, specifically methylates the guanosine in position 1516 of 16S rRNA. In Vibrio campbellii (strain ATCC BAA-1116), this protein is Ribosomal RNA small subunit methyltransferase J.